Consider the following 218-residue polypeptide: Ribonuclease HII (218 aa).

The RNase H type-2 domain occupies 23-216 (RFLCGVDEAG…VREAIARGLV (194 aa)). A divalent metal cation is bound by residues aspartate 29, glutamate 30, and aspartate 125.

The protein belongs to the RNase HII family. Mn(2+) is required as a cofactor. It depends on Mg(2+) as a cofactor.

It localises to the cytoplasm. It carries out the reaction Endonucleolytic cleavage to 5'-phosphomonoester.. Endonuclease that specifically degrades the RNA of RNA-DNA hybrids. The chain is Ribonuclease HII from Cupriavidus pinatubonensis (strain JMP 134 / LMG 1197) (Cupriavidus necator (strain JMP 134)).